The sequence spans 370 residues: Holliday junction branch migration complex subunit RuvB (370 aa).

Residues 1-182 form a large ATPase domain (RuvB-L) region; it reads MDERMMTSAK…FGVIHRLEYY (182 aa). ATP-binding positions include Leu-21, Arg-22, Gly-63, Lys-66, Thr-67, Thr-68, 129–131, Arg-172, Tyr-182, and Arg-219; that span reads EDF. Thr-67 provides a ligand contact to Mg(2+). A small ATPAse domain (RuvB-S) region spans residues 183 to 253; it reads RPDELEFIIL…VAREALRRLE (71 aa). Residues 256–370 form a head domain (RuvB-H) region; it reads PRGLDTTDQR…AEQAALSFDE (115 aa). Residues Arg-311 and Arg-316 each coordinate DNA.

It belongs to the RuvB family. As to quaternary structure, homohexamer. Forms an RuvA(8)-RuvB(12)-Holliday junction (HJ) complex. HJ DNA is sandwiched between 2 RuvA tetramers; dsDNA enters through RuvA and exits via RuvB. An RuvB hexamer assembles on each DNA strand where it exits the tetramer. Each RuvB hexamer is contacted by two RuvA subunits (via domain III) on 2 adjacent RuvB subunits; this complex drives branch migration. In the full resolvosome a probable DNA-RuvA(4)-RuvB(12)-RuvC(2) complex forms which resolves the HJ.

It is found in the cytoplasm. It catalyses the reaction ATP + H2O = ADP + phosphate + H(+). Functionally, the RuvA-RuvB-RuvC complex processes Holliday junction (HJ) DNA during genetic recombination and DNA repair, while the RuvA-RuvB complex plays an important role in the rescue of blocked DNA replication forks via replication fork reversal (RFR). RuvA specifically binds to HJ cruciform DNA, conferring on it an open structure. The RuvB hexamer acts as an ATP-dependent pump, pulling dsDNA into and through the RuvAB complex. RuvB forms 2 homohexamers on either side of HJ DNA bound by 1 or 2 RuvA tetramers; 4 subunits per hexamer contact DNA at a time. Coordinated motions by a converter formed by DNA-disengaged RuvB subunits stimulates ATP hydrolysis and nucleotide exchange. Immobilization of the converter enables RuvB to convert the ATP-contained energy into a lever motion, pulling 2 nucleotides of DNA out of the RuvA tetramer per ATP hydrolyzed, thus driving DNA branch migration. The RuvB motors rotate together with the DNA substrate, which together with the progressing nucleotide cycle form the mechanistic basis for DNA recombination by continuous HJ branch migration. Branch migration allows RuvC to scan DNA until it finds its consensus sequence, where it cleaves and resolves cruciform DNA. In Heliobacterium modesticaldum (strain ATCC 51547 / Ice1), this protein is Holliday junction branch migration complex subunit RuvB.